Here is a 66-residue protein sequence, read N- to C-terminus: Large ribosomal subunit protein bL35 (66 aa).

This sequence belongs to the bacterial ribosomal protein bL35 family.

The chain is Large ribosomal subunit protein bL35 from Synechococcus sp. (strain ATCC 27144 / PCC 6301 / SAUG 1402/1) (Anacystis nidulans).